The sequence spans 415 residues: Fructose-1,6-bisphosphatase, chloroplastic (415 aa).

The transit peptide at 1–57 (MASIGPATTTAVKLRSSIFNPQSSTLSPSQQCITFTKSLHSFPTATRHNVASGVRCM) directs the protein to the chloroplast. Positions 135, 164, 185, 187, and 188 each coordinate Mg(2+). 188 to 191 (DGSS) provides a ligand contact to substrate. The segment at 207 to 232 (SPNDECIVDSDHDDESQLSAEEQRCV) is involved in light regulation. A disulfide bridge connects residues C231 and C236. 5 residues coordinate substrate: N295, Y327, Y345, Y347, and K357. Mg(2+) is bound at residue E363.

The protein belongs to the FBPase class 1 family. In terms of assembly, homotetramer. Mg(2+) is required as a cofactor.

It localises to the plastid. It is found in the chloroplast. The catalysed reaction is beta-D-fructose 1,6-bisphosphate + H2O = beta-D-fructose 6-phosphate + phosphate. It functions in the pathway carbohydrate biosynthesis; Calvin cycle. The protein is Fructose-1,6-bisphosphatase, chloroplastic of Spinacia oleracea (Spinach).